We begin with the raw amino-acid sequence, 252 residues long: Adenosine 5'-phosphosulfate reductase (252 aa).

[4Fe-4S] cluster-binding residues include C125, C126, C208, and C211. The segment at 219-252 (DGYSREGRWSDRDKTECGLHTSPEDEDGAHAAES) is disordered. Positions 221–235 (YSREGRWSDRDKTEC) are enriched in basic and acidic residues. C235 functions as the Nucleophile; cysteine thiosulfonate intermediate in the catalytic mechanism.

The protein belongs to the PAPS reductase family. CysH subfamily. [4Fe-4S] cluster is required as a cofactor.

The protein localises to the cytoplasm. The catalysed reaction is [thioredoxin]-disulfide + sulfite + AMP + 2 H(+) = adenosine 5'-phosphosulfate + [thioredoxin]-dithiol. Its pathway is sulfur metabolism; hydrogen sulfide biosynthesis; sulfite from sulfate. Functionally, catalyzes the formation of sulfite from adenosine 5'-phosphosulfate (APS) using thioredoxin as an electron donor. This is Adenosine 5'-phosphosulfate reductase from Salinibacter ruber (strain DSM 13855 / M31).